The following is a 382-amino-acid chain: 6-hydroxynicotinate 3-monooxygenase (382 aa).

The signal sequence occupies residues 1–25; it reads MRGRQKIAIVGAGLGGAAAATLLQQ. FAD-binding positions include Gly15, 34 to 35, His47, Arg108, and Leu130; that span reads EQ. The Proton acceptor role is filled by His47. Tyr215 functions as the Proton acceptor in the catalytic mechanism. FAD contacts are provided by residues Asp294 and 307–308; that span reads AC.

Belongs to the 6-hydroxynicotinate 3-monooxygenase family. In terms of assembly, monomer. Requires FAD as cofactor.

It catalyses the reaction 6-hydroxynicotinate + NADH + O2 + 2 H(+) = 2,5-dihydroxypyridine + CO2 + NAD(+) + H2O. It participates in cofactor degradation; nicotinate degradation. Its function is as follows. Flavin-dependent monooxygenase (FMO) that catalyzes the decarboxylative hydroxylation of 6-hydroxynicotinic acid (6-HNA) to 2,5-dihydroxypyridine (2,5-DHP) with concomitant oxidation of NADH, a step in the aerobic nicotinate degradation pathway. This Pseudomonas putida (strain ATCC 47054 / DSM 6125 / CFBP 8728 / NCIMB 11950 / KT2440) protein is 6-hydroxynicotinate 3-monooxygenase.